The sequence spans 184 residues: ATP-dependent protease subunit HslV (184 aa).

Thr12 is a catalytic residue. The Na(+) site is built by Ala166, Cys169, and Thr172.

The protein belongs to the peptidase T1B family. HslV subfamily. As to quaternary structure, a double ring-shaped homohexamer of HslV is capped on each side by a ring-shaped HslU homohexamer. The assembly of the HslU/HslV complex is dependent on binding of ATP.

The protein resides in the cytoplasm. It carries out the reaction ATP-dependent cleavage of peptide bonds with broad specificity.. Its activity is regulated as follows. Allosterically activated by HslU binding. Its function is as follows. Protease subunit of a proteasome-like degradation complex believed to be a general protein degrading machinery. This is ATP-dependent protease subunit HslV from Brucella melitensis biotype 1 (strain ATCC 23456 / CCUG 17765 / NCTC 10094 / 16M).